Reading from the N-terminus, the 237-residue chain is MEDLQTQMKEAVAKAAIEQIHDGMVLGLGSGSTAALMIKALGAKISSGHLKDIVGVTTSFQGEVLATELGIPLQGLSAVSQIDLAIDGADEVDSNFQLIKGGGACHVQEKLVASLAERFVVVVDSSKIVKTLNLTFKLPVEVLPSAWQLVKNKIHEIGGVSQLRMAQKKAGPIVTDQGNLVLDVTFAGGINDPQTLEKQINNIPGVLENGLFVNLADEVLVGEIVSGTPGVKSLQKI.

Substrate contacts are provided by residues 30–33 (SGST), 87–90 (DGAD), and 100–103 (KGGG). Glu109 functions as the Proton acceptor in the catalytic mechanism. Lys127 provides a ligand contact to substrate.

The protein belongs to the ribose 5-phosphate isomerase family. In terms of assembly, homodimer.

It carries out the reaction aldehydo-D-ribose 5-phosphate = D-ribulose 5-phosphate. Its pathway is carbohydrate degradation; pentose phosphate pathway; D-ribose 5-phosphate from D-ribulose 5-phosphate (non-oxidative stage): step 1/1. In terms of biological role, catalyzes the reversible conversion of ribose-5-phosphate to ribulose 5-phosphate. The polypeptide is Ribose-5-phosphate isomerase A (Prochlorococcus marinus (strain MIT 9211)).